The primary structure comprises 427 residues: UDP-N-acetyl-D-mannosamine dehydrogenase (427 aa).

Residues Tyr19, Ile20, Asp39, Arg44, Thr91, and Thr130 each coordinate NAD(+). Residues Arg155, Val156, Lys207, Asn211, Arg214, His245, Arg247, and Gly258 each contribute to the UDP-N-acetyl-alpha-D-mannosaminouronate site. The Proton donor/acceptor role is filled by Lys207. Cys261 (nucleophile) is an active-site residue. Positions 318 and 319 each coordinate UDP-N-acetyl-alpha-D-mannosaminouronate. Arg326 contacts NAD(+). A UDP-N-acetyl-alpha-D-mannosaminouronate-binding site is contributed by Lys404.

This sequence belongs to the UDP-glucose/GDP-mannose dehydrogenase family. As to quaternary structure, homotetramer; probably dimer of dimers.

The enzyme catalyses UDP-N-acetyl-alpha-D-mannosamine + 2 NAD(+) + H2O = UDP-N-acetyl-alpha-D-mannosaminouronate + 2 NADH + 3 H(+). Functionally, catalyzes the four-electron oxidation of UDP-N-acetyl-D-mannosamine (UDP-ManNAc), reducing NAD(+) and releasing UDP-N-acetylmannosaminuronic acid (UDP-ManNAcA). In Methanococcus maripaludis (strain C7 / ATCC BAA-1331), this protein is UDP-N-acetyl-D-mannosamine dehydrogenase (wecC).